The chain runs to 942 residues: Mitogen-activated protein kinase kinase kinase A (942 aa).

Residues 15–96 form the PB1 domain; that stretch reads FIRIKCILGD…NPTKIISTKF (82 aa). A disordered region spans residues 107–144; that stretch reads PLSSSLSPTQSLILNNNNNNNNNNNNNNNNNNNNNNNN. The Protein kinase domain occupies 170-429; it reads WQKGQILGRG…ANQLLKHPFI (260 aa). ATP-binding positions include 176–184 and K199; that span reads LGRGGYGSV. D297 serves as the catalytic Proton acceptor. The span at 441-486 shows a compositional bias: low complexity; the sequence is ISPTTTLSTNTTNTTATTTTTNNATNSNINQQQQQQQQQPPTRTQR. The interval 441 to 512 is disordered; sequence ISPTTTLSTN…ISTSTSSSSS (72 aa). Positions 487–498 are enriched in polar residues; sequence VSISAGSSNNKR. The segment covering 500–512 has biased composition (low complexity); that stretch reads TPPISTSTSSSSS. The helical transmembrane segment at 513–533 threads the bilayer; it reads SILNNFSINIILPINLIILIF. The 47-residue stretch at 518–564 folds into the F-box domain; sequence FSINIILPINLIILIFREIKPNFVNTLSRVCKHWKQIIDDDELWNKY. WD repeat units follow at residues 607 to 646, 690 to 733, 736 to 778, 780 to 825, 828 to 865, 872 to 909, and 912 to 942; these read GHDK…HHNH, GHSG…TLFT, NHQE…STLR, HTGG…KVRS, QHTE…TIST, RQKN…DSRS, and GHHE…WSID.

The protein belongs to the protein kinase superfamily. STE Ser/Thr protein kinase family. MAP kinase kinase kinase subfamily. In terms of assembly, interacts with ubcB and ubpB. The cofactor is Mg(2+). Post-translationally, ubcB and ubpB differentially control ubiquitination/deubiquitination and degradation in a cell-type-specific and temporally regulated manner.

The protein resides in the membrane. It carries out the reaction L-seryl-[protein] + ATP = O-phospho-L-seryl-[protein] + ADP + H(+). The enzyme catalyses L-threonyl-[protein] + ATP = O-phospho-L-threonyl-[protein] + ADP + H(+). Regulates cell-type differentiation and spatial patterning, required for the proper induction and maintenance of prespore cell differentiation. The sequence is that of Mitogen-activated protein kinase kinase kinase A from Dictyostelium discoideum (Social amoeba).